The following is a 359-amino-acid chain: Tropomodulin-1 (359 aa).

The interval 36 to 61 (ELDPDNALLPAGLRQKDQTTKAPTGP) is disordered. A tropomyosin-binding region spans residues 39–138 (PDNALLPAGL…CDIAAILGMH (100 aa)).

The protein belongs to the tropomodulin family. In terms of assembly, binds to the N-terminus of tropomyosin and to actin. Interacts with FLII. In terms of tissue distribution, highly expressed in the erythrocyte, heart and skeletal muscle.

It is found in the cytoplasm. Its subcellular location is the cytoskeleton. Functionally, blocks the elongation and depolymerization of the actin filaments at the pointed end. The Tmod/TM complex contributes to the formation of the short actin protofilament, which in turn defines the geometry of the membrane skeleton. May play an important role in regulating the organization of actin filaments by preferentially binding to a specific tropomyosin isoform at its N-terminus. In Homo sapiens (Human), this protein is Tropomodulin-1 (TMOD1).